The chain runs to 254 residues: Ribosomal RNA small subunit methyltransferase G (254 aa).

Residues Gly-84, Phe-89, 136-137 (VE), and Arg-155 each bind S-adenosyl-L-methionine. Residues 231-254 (HLYPRAVGIPSKQPLGIQADDNRS) form a disordered region.

It belongs to the methyltransferase superfamily. RNA methyltransferase RsmG family.

It is found in the cytoplasm. In terms of biological role, specifically methylates the N7 position of a guanine in 16S rRNA. The polypeptide is Ribosomal RNA small subunit methyltransferase G (Synechococcus sp. (strain WH7803)).